A 134-amino-acid polypeptide reads, in one-letter code: UPF0216 protein AF_0460 (134 aa).

Belongs to the UPF0216 family.

The polypeptide is UPF0216 protein AF_0460 (Archaeoglobus fulgidus (strain ATCC 49558 / DSM 4304 / JCM 9628 / NBRC 100126 / VC-16)).